Reading from the N-terminus, the 142-residue chain is Hemoglobin subunit alpha-1 (142 aa).

Positions 2–142 constitute a Globin domain; sequence KLSADDKHNV…VGYVLASKYR (141 aa). Residue His59 coordinates O2. His88 is a heme b binding site.

It belongs to the globin family. Major hemoglobin is a heterotetramer of two alpha-1 chains and two beta-1 chains. In terms of tissue distribution, red blood cells.

Its function is as follows. Involved in oxygen transport from the lung to the various peripheral tissues. In Triturus cristatus (Great crested newt), this protein is Hemoglobin subunit alpha-1.